The chain runs to 221 residues: Eukaryotic translation initiation factor NCBP (221 aa).

It belongs to the eukaryotic initiation factor 4E family. EIF4F is a multi-subunit complex, the composition of which varies with external and internal environmental conditions. It is composed of at least EIF4A, EIF4E and EIF4G. EIF4E is also known to interact with other partners. In higher plants two isoforms of EIF4F have been identified, named isoform EIF4F and isoform EIF(iso)4F. Isoform EIF4F has subunits p220 and p26, whereas isoform EIF(iso)4F has subunits p82 and p28.

Recognizes and binds the 7-methylguanosine-containing mRNA cap during an early step in the initiation of protein synthesis and facilitates ribosome binding by inducing the unwinding of the mRNAs secondary structures. In Arabidopsis thaliana (Mouse-ear cress), this protein is Eukaryotic translation initiation factor NCBP (NCBP).